The primary structure comprises 393 residues: Pigment production hydroxylase (393 aa).

Involved in pigment production acting as a hydroxylase that transforms indole to indoxyl, resulting in the formation of indigo. The chain is Pigment production hydroxylase from Rhodococcus erythropolis (Arthrobacter picolinophilus).